A 74-amino-acid chain; its full sequence is Anaphase-promoting complex subunit 13 (74 aa).

A disordered region spans residues 33 to 56; that stretch reads LSELPEPEQDNGGTTESVKEQEMK.

Belongs to the APC13 family. The mammalian APC/C is composed at least of 14 distinct subunits ANAPC1, ANAPC2, CDC27/APC3, ANAPC4, ANAPC5, CDC16/APC6, ANAPC7, CDC23/APC8, ANAPC10, ANAPC11, CDC26/APC12, ANAPC13, ANAPC15 and ANAPC16 that assemble into a complex of at least 19 chains with a combined molecular mass of around 1.2 MDa; APC/C interacts with FZR1 and FBXO5.

It is found in the nucleus. Its pathway is protein modification; protein ubiquitination. Component of the anaphase promoting complex/cyclosome (APC/C), a cell cycle-regulated E3 ubiquitin ligase that controls progression through mitosis and the G1 phase of the cell cycle. The APC/C complex acts by mediating ubiquitination and subsequent degradation of target proteins: it mainly mediates the formation of 'Lys-11'-linked polyubiquitin chains and, to a lower extent, the formation of 'Lys-48'- and 'Lys-63'-linked polyubiquitin chains. The APC/C complex catalyzes assembly of branched 'Lys-11'-/'Lys-48'-linked branched ubiquitin chains on target proteins. The polypeptide is Anaphase-promoting complex subunit 13 (Anapc13) (Mus musculus (Mouse)).